The following is an 86-amino-acid chain: DNA-directed RNA polymerase subunit Rpo11 (86 aa).

The protein belongs to the archaeal Rpo11/eukaryotic RPB11/RPC19 RNA polymerase subunit family. Part of the RNA polymerase complex.

It localises to the cytoplasm. The enzyme catalyses RNA(n) + a ribonucleoside 5'-triphosphate = RNA(n+1) + diphosphate. Functionally, DNA-dependent RNA polymerase (RNAP) catalyzes the transcription of DNA into RNA using the four ribonucleoside triphosphates as substrates. This is DNA-directed RNA polymerase subunit Rpo11 from Archaeoglobus fulgidus (strain ATCC 49558 / DSM 4304 / JCM 9628 / NBRC 100126 / VC-16).